The sequence spans 251 residues: Metallo-beta-lactamase domain-containing protein 1 (251 aa).

Positions 118, 120, 122, 123, 173, 196, and 235 each coordinate Zn(2+).

It belongs to the metallo-beta-lactamase superfamily. Glyoxalase II family. Homodimer. Requires Zn(2+) as cofactor.

It is found in the cytoplasm. The protein localises to the cytosol. The protein resides in the nucleus. The enzyme catalyses a ribonucleotidyl-ribonucleotide-RNA + H2O = a 3'-end ribonucleotide-RNA + a 5'-end 5'-phospho-ribonucleoside-RNA + H(+). Endoribonuclease that catalyzes the hydrolysis of histone-coding pre-mRNA 3'-end. Involved in histone pre-mRNA processing during the S-phase of the cell cycle, which is required for entering/progressing through S-phase. Cleaves histone pre-mRNA at a major and a minor cleavage site after the 5'-ACCCA-3' and the 5'-ACCCACA-3' sequence, respectively, and located downstream of the stem-loop. May require the presence of the HDE element located at the histone pre-RNA 3'-end to avoid non-specific cleavage. This chain is Metallo-beta-lactamase domain-containing protein 1 (Mblac1), found in Rattus norvegicus (Rat).